A 305-amino-acid chain; its full sequence is MAVQKYTVALFLAVALVAGPAALYAGDGYAPATPAASATLATPATPAASPQHAGTTEYHIVRKAGLNEEKNAARQTDDEQKRSDEINCPDFNKSVHCRADRLPVCSSTSAHSSKQDVAWMLGYGSIQGFSMDDASVGSVSSEFHVIESAIEVITYIGEEVKVIPAGEVEVINKVKAAFSTAATAADEAPANDKFTVFVSSFNKAIKETTGGAYAGYKFIPTLEAAVKQAYAASSATAPEVKYAVFETALKKAISAMSEAQKEAKPAAAISAATTTISASTATPAAPPPPQLGTATPAAVAGGYKV.

The signal sequence occupies residues 1-25 (MAVQKYTVALFLAVALVAGPAALYA). Residues 65 to 85 (GLNEEKNAARQTDDEQKRSDE) show a composition bias toward basic and acidic residues. 2 disordered regions span residues 65–87 (GLNE…DEIN) and 279–299 (STAT…PAAV).

This sequence belongs to the Poa p IX/Phl p VI allergen family.

In Phalaris aquatica (Canary grass), this protein is Major pollen allergen Pha a 5.2.